We begin with the raw amino-acid sequence, 102 residues long: Protein RnfH (102 aa).

It belongs to the UPF0125 (RnfH) family.

The chain is Protein RnfH from Haemophilus influenzae (strain PittEE).